A 108-amino-acid chain; its full sequence is Small proline-rich protein 5 (108 aa).

A compositionally biased stretch (low complexity) spans 1–13 (MSQQKQKQCAPPQ). 2 disordered regions span residues 1–24 (MSQQ…QRCP) and 73–108 (PPPQ…SKQK). 2 stretches are compositionally biased toward pro residues: residues 14-24 (QCCPPPQQRCP) and 73-100 (PPPQ…PPPQ).

In terms of biological role, positively regulates keratinocyte differentiation by inducing genes associated with epidermal differentiation. This is Small proline-rich protein 5 from Homo sapiens (Human).